Consider the following 297-residue polypeptide: 3-methyl-2-oxobutanoate hydroxymethyltransferase (297 aa).

Polar residues predominate over residues 1 to 12 (MSEQISEQSEQN). A disordered region spans residues 1–36 (MSEQISEQSEQNVYGACPPVPAGESSPSAASAPRTK). Residues 22 to 33 (AGESSPSAASAP) are compositionally biased toward low complexity. Mg(2+)-binding residues include Asp78 and Asp117. Residues 78-79 (DS), Asp117, and Lys147 each bind 3-methyl-2-oxobutanoate. Glu149 is a Mg(2+) binding site. Residue Glu215 is the Proton acceptor of the active site.

The protein belongs to the PanB family. As to quaternary structure, homodecamer; pentamer of dimers. The cofactor is Mg(2+).

The protein resides in the cytoplasm. The catalysed reaction is 3-methyl-2-oxobutanoate + (6R)-5,10-methylene-5,6,7,8-tetrahydrofolate + H2O = 2-dehydropantoate + (6S)-5,6,7,8-tetrahydrofolate. Its pathway is cofactor biosynthesis; (R)-pantothenate biosynthesis; (R)-pantoate from 3-methyl-2-oxobutanoate: step 1/2. Functionally, catalyzes the reversible reaction in which hydroxymethyl group from 5,10-methylenetetrahydrofolate is transferred onto alpha-ketoisovalerate to form ketopantoate. The polypeptide is 3-methyl-2-oxobutanoate hydroxymethyltransferase (Mycobacterium ulcerans (strain Agy99)).